The primary structure comprises 99 residues: Small integral membrane protein 9 (99 aa).

The N-terminal stretch at 1–26 (MEPQKLLIIGFLLCSLTCLLLETVAS) is a signal peptide. Over 27-73 (SPLPLSALGIQEKTGSKPRSGGNHRSWLNNFRDYLWQLIKSALPPAA) the chain is Extracellular. The chain crosses the membrane as a helical span at residues 74–94 (IVAFLLTSALMGILCCFTILV). The Cytoplasmic segment spans residues 95–99 (VDPVH).

It localises to the cell membrane. In Homo sapiens (Human), this protein is Small integral membrane protein 9 (SMIM9).